The primary structure comprises 399 residues: Glutathione-independent formaldehyde dehydrogenase (399 aa).

Residue cysteine 47 participates in Zn(2+) binding. Positions 48, 49, and 52 each coordinate NAD(+). Positions 68, 98, 101, 104, 112, and 170 each coordinate Zn(2+). NAD(+) contacts are provided by valine 198, aspartate 218, arginine 223, valine 263, arginine 268, histidine 270, proline 300, leucine 302, glycine 337, and threonine 339.

It belongs to the zinc-containing alcohol dehydrogenase family. Homotetramer. Requires Zn(2+) as cofactor.

The enzyme catalyses formaldehyde + NAD(+) + H2O = formate + NADH + 2 H(+). It carries out the reaction acetaldehyde + NAD(+) + H2O = acetate + NADH + 2 H(+). The catalysed reaction is 2 formaldehyde + H2O = methanol + formate + H(+). With respect to regulation, inactivated by bipyridine and p-chloromercuribenzoate. In terms of biological role, dehydrogenase that catalyzes the NAD(+)-dependent oxidation of formaldehyde and acetaldehyde, and, to a lesser extent, long-chain alcohols, but is inactive against propionaldehyde, butyraldehyde, methanol and ethanol. Can also catalyze the dismutation of a wide range of aldehydes such as formaldehyde. This is Glutathione-independent formaldehyde dehydrogenase from Pseudomonas putida (Arthrobacter siderocapsulatus).